Consider the following 360-residue polypeptide: Phenylalanine--tRNA ligase alpha subunit (360 aa).

Glu-260 provides a ligand contact to Mg(2+).

Belongs to the class-II aminoacyl-tRNA synthetase family. Phe-tRNA synthetase alpha subunit type 1 subfamily. As to quaternary structure, tetramer of two alpha and two beta subunits. It depends on Mg(2+) as a cofactor.

Its subcellular location is the cytoplasm. It carries out the reaction tRNA(Phe) + L-phenylalanine + ATP = L-phenylalanyl-tRNA(Phe) + AMP + diphosphate + H(+). The sequence is that of Phenylalanine--tRNA ligase alpha subunit from Methylobacterium sp. (strain 4-46).